The following is a 314-amino-acid chain: MSRPRRRGRDINGVLLLDKPQGMSSNDALQKVKRIYNANRAGHTGALDPLATGMLPICLGEATKFSQYLLDSDKRYRVIARLGQRTDTSDADGQIVEERPVTFSAEQLAAALDTFRGDIEQIPSMYSALKYQGKKLYEYARQGIEVPREARPITVYELLFIRHEGNELELEIHCSKGTYIRTIIDDLGEKLGCGAHVIYLRRLAVSKYPVERIVTLEHLRELVEQAEQQDIPAAELLDPLLMPMDSPASDYPVVNLPLTSSVYFKNGNPVRTSGAPLEGLVRVTEGENGKFIGMGEIDDEGRVAPRRLVVEYPA.

His-43 is a substrate binding site. The Nucleophile role is filled by Asp-48. Residues Tyr-76, Tyr-179, and Leu-200 each contribute to the substrate site.

It belongs to the pseudouridine synthase TruB family. Type 1 subfamily.

It catalyses the reaction uridine(55) in tRNA = pseudouridine(55) in tRNA. Responsible for synthesis of pseudouridine from uracil-55 in the psi GC loop of transfer RNAs. This is tRNA pseudouridine synthase B from Shigella flexneri.